A 476-amino-acid chain; its full sequence is Vitamin D-binding protein (476 aa).

The N-terminal stretch at 1-16 (MKRVLVLLLALAFGHA) is a signal peptide. Albumin domains are found at residues 17–208 (LERG…QMKH), 209–394 (LSLL…LLKR), and 395–476 (QLTS…TLQS). 14 disulfides stabilise this stretch: cysteine 29–cysteine 75, cysteine 74–cysteine 83, cysteine 96–cysteine 112, cysteine 111–cysteine 122, cysteine 145–cysteine 190, cysteine 189–cysteine 198, cysteine 220–cysteine 266, cysteine 265–cysteine 273, cysteine 286–cysteine 300, cysteine 299–cysteine 311, cysteine 335–cysteine 376, cysteine 375–cysteine 384, cysteine 407–cysteine 453, and cysteine 452–cysteine 462. N-linked (GlcNAc...) asparagine glycosylation is present at asparagine 288. Phosphoserine is present on serine 434.

This sequence belongs to the ALB/AFP/VDB family. As to quaternary structure, associates with membrane-bound immunoglobulin on the surface of B-lymphocytes and with IgG Fc receptor on the membranes of T-lymphocytes. Interacts with LRP2; the interaction is required for renal uptake of GC in complex with 25-hydroxyvitamin D3.

Its subcellular location is the secreted. Involved in vitamin D transport and storage, scavenging of extracellular G-actin, enhancement of the chemotactic activity of C5 alpha for neutrophils in inflammation and macrophage activation. The polypeptide is Vitamin D-binding protein (Gc) (Mus musculus (Mouse)).